The sequence spans 311 residues: HPr kinase/phosphorylase (311 aa).

Active-site residues include His-138 and Lys-159. 153–160 serves as a coordination point for ATP; that stretch reads GDSGIGKS. Ser-160 lines the Mg(2+) pocket. Asp-177 functions as the Proton acceptor; for phosphorylation activity. Proton donor; for dephosphorylation activity in the catalytic mechanism. The segment at 201–210 is important for the catalytic mechanism of both phosphorylation and dephosphorylation; it reads IEIRGVGIID. Residue Glu-202 participates in Mg(2+) binding. The active site involves Arg-243. Residues 264–269 form an important for the catalytic mechanism of dephosphorylation region; the sequence is PVKTGR.

This sequence belongs to the HPrK/P family. Homohexamer. The cofactor is Mg(2+).

The catalysed reaction is [HPr protein]-L-serine + ATP = [HPr protein]-O-phospho-L-serine + ADP + H(+). The enzyme catalyses [HPr protein]-O-phospho-L-serine + phosphate + H(+) = [HPr protein]-L-serine + diphosphate. In terms of biological role, catalyzes the ATP- as well as the pyrophosphate-dependent phosphorylation of a specific serine residue in HPr, a phosphocarrier protein of the phosphoenolpyruvate-dependent sugar phosphotransferase system (PTS). HprK/P also catalyzes the pyrophosphate-producing, inorganic phosphate-dependent dephosphorylation (phosphorolysis) of seryl-phosphorylated HPr (P-Ser-HPr). The two antagonistic activities of HprK/P are regulated by several intracellular metabolites, which change their concentration in response to the absence or presence of rapidly metabolisable carbon sources (glucose, fructose, etc.) in the growth medium. Therefore, by controlling the phosphorylation state of HPr, HPrK/P is a sensor enzyme that plays a major role in the regulation of carbon metabolism and sugar transport: it mediates carbon catabolite repression (CCR), and regulates PTS-catalyzed carbohydrate uptake and inducer exclusion. The chain is HPr kinase/phosphorylase from Streptococcus pneumoniae (strain 70585).